Here is an 82-residue protein sequence, read N- to C-terminus: M-theraphotoxin-Gr1a (82 aa).

Positions 1 to 21 are cleaved as a signal peptide; sequence MKTSVVFVIAGLALLSVVCYA. A propeptide spanning residues 22-46 is cleaved from the precursor; sequence SELKEQSSVNEVLSTIFHFEQPEER. Intrachain disulfides connect Cys-48/Cys-63, Cys-55/Cys-69, and Cys-62/Cys-76. Phenylalanine amide is present on Phe-80.

This sequence belongs to the neurotoxin 10 (Hwtx-1) family. 52 (MTx4) subfamily. As to expression, expressed by the venom gland.

It is found in the secreted. This cationic hydrophobic peptide acts on a lot of different channels and has an antimicrobial activity. It blocks mechanosensitive ion channels (also named stretch-activated channels or SACs), without having effect on whole-cell voltage-sensitive currents. It also affects acetylcholine receptors (nAChRs) through interactions with membrane lipids by prolonging the closing time without affecting channel conductance or opening activity. It shows high affinity for lipid bilayers. It acts by partitioning into the membrane and perturbing the interface between the channel and the lipid bilayer without necessarily being in physical contact with the channel. It inhibits atrial fibrillation as well as the membrane motor of outer hair cells at low doses. It also binds to the voltage sensor of voltage-gated potassium channels from the archaebacterium Aeropyrum pernix (KvAP) without affecting channel gating. It also shows a low inhibition on a large spectra of sodium channels (Nav1.1/SCN1A, Nav1.2/SCN2A, Nav1.3/SCN3A, Nav1.4/SCN4A, Nav1.5/SCN5A, Nav1.6/SCN8A, Nav1.7/SCN9A) (IC(50)=7.4-14 uM), and potassium channels Kv11.1/KCNH2 and Kv11.2/KCNH6 (IC(50)=11 uM for both). It exhibits antimicrobial activities against the Gram-positive bacteria B.subtilis (MIC=0.5 uM), S.aureus (MIC=2-4 uM), and S.epidermidis (MIC=4-8 uM), and Gram-negative bacteria S.typhimurium (MIC=32.64 uM), P.aeruginosa (MIC=8-16 uM), and E.coli (MIC=8-16 uM). This is M-theraphotoxin-Gr1a from Grammostola rosea (Chilean rose tarantula).